The following is a 347-amino-acid chain: NADH-ubiquinone oxidoreductase chain 2 (347 aa).

The next 11 helical transmembrane spans lie at 1-21 (MNPL…MMVV), 25-45 (HWLL…PIMM), 59-79 (YLLT…INLM), 96-116 (TLMT…FWVP), 122-142 (IPLT…LSIL), 149-169 (INLH…GWGG), 178-198 (IMAY…LYNP), 200-220 (LTLL…MLFI), 237-257 (MPVI…LPPL), 274-294 (DMLI…YFYM), and 325-345 (LLPT…MLSI).

Belongs to the complex I subunit 2 family. Core subunit of respiratory chain NADH dehydrogenase (Complex I) which is composed of 45 different subunits. Interacts with TMEM242.

It is found in the mitochondrion inner membrane. The catalysed reaction is a ubiquinone + NADH + 5 H(+)(in) = a ubiquinol + NAD(+) + 4 H(+)(out). Its function is as follows. Core subunit of the mitochondrial membrane respiratory chain NADH dehydrogenase (Complex I) which catalyzes electron transfer from NADH through the respiratory chain, using ubiquinone as an electron acceptor. Essential for the catalytic activity and assembly of complex I. This is NADH-ubiquinone oxidoreductase chain 2 from Balaenoptera physalus (Fin whale).